The sequence spans 142 residues: Hemoglobin subunit theta-1 (142 aa).

The 141-residue stretch at 2-142 folds into the Globin domain; sequence ALSAEDRALV…VISALVSEYR (141 aa). Residues His59 and His88 each contribute to the heme b site.

This sequence belongs to the globin family.

This chain is Hemoglobin subunit theta-1 (HBQ1), found in Homo sapiens (Human).